We begin with the raw amino-acid sequence, 4377 residues long: Ankyrin-3 (4377 aa).

A disordered region spans residues 1-44 (MAHAASQLKKNRDLEINAEEEPEKKRKHRKRSRDRKKKSDANAS). Positions 25 to 38 (KRKHRKRSRDRKKK) are enriched in basic residues. The residue at position 39 (S39) is a Phosphoserine. ANK repeat units lie at residues 73 to 102 (NGLNALHLASKEGHVEVVSELLQREANVDA), 106 to 135 (KGNTALHIASLAGQAEVVKVLVTNGANVNA), 139 to 168 (NGFTPLYMAAQENHLEVVKFLLDNGASQSL), 172 to 201 (DGFTPLAVALQQGHDQVVSLLLENDTKGKV), 203 to 230 (LPALHIAARKDDTKAAALLLQNDNNADV), 234 to 263 (SGFTPLHIAAHYGNINVATLLLNRAAAVDF), 267 to 296 (NDITPLHVASKRGNANMVKLLLDRGAKIDA), 300 to 329 (DGLTPLHCGARSGHEQVVEMLLDRAAPILS), 333 to 362 (NGLSPLHMATQGDHLNCVQLLLQHNVPVDD), 366 to 395 (DYLTALHVAAHCGHYKVAKVLLDKKANPNA), 399 to 428 (NGFTPLHIACKKNRIKVMELLLKHGASIQA), 432 to 461 (SGLTPIHVAAFMGHVNIVSQLMHHGASPNT), 465 to 494 (RGETALHMAARSGQAEVVRYLVQDGAQVEA), 498 to 527 (DDQTPLHISARLGKADIVQQLLQQGASPNA), 531 to 560 (SGYTPLHLSAREGHEDVAAFLLDHGASLSI), 564 to 593 (KGFTPLHVAAKYGKLEVANLLLQKSASPDA), 597 to 626 (SGLTPLHVAAHYDNQKVALLLLDQGASPHA), 630 to 659 (NGYTPLHIAAKKNQMDIATTLLEYGADANA), 663 to 692 (QGIASVHLAAQEGHVDMVSLLLGRNANVNL), 696 to 725 (SGLTPLHLAAQEDRVNVAEVLVNQGAHVDA), 729 to 758 (MGYTPLHVGCHYGNIKIVNFLLQHSAKVNA), 762 to 791 (NGYTPLHQAAQQGHTHIINVLLQNNASPNE), and 795 to 825 (NGNTALGIARRLGYISVVDTLKIVTEETMTT). Phosphoserine is present on T468. Phosphoserine is present on S623. 2 positions are modified to phosphoserine: T765 and E791. Residues S847, S861, S867, S913, S916, S922, S957, S959, and S1113 each carry the phosphoserine modification. ZU5 domains are found at residues 984–1139 (FLVS…VVSR) and 1141–1288 (KQES…LADC). The segment at 1273–1407 (VSFTTNVSAR…SIKIRDTSQE (135 aa)) is UPA domain. Phosphoserine occurs at positions 1445, 1459, and 1470. Residues 1519 to 1539 (SGFTSLSSSSSNTPSASPLKS) show a composition bias toward low complexity. Residues 1519–1540 (SGFTSLSSSSSNTPSASPLKSI) form a disordered region. Phosphoserine is present on residues S1622, S1625, S1632, I1651, L1658, S1984, S2111, S2123, and S2126. Disordered regions lie at residues 1968–1987 (VDNKGSPKSPKSDKGHSPED), 2107–2159 (TILE…VPIP), 2176–2245 (YDPS…EETH), 2299–2322 (AVSPDVHKSAAETSAQHAEKDNQM), 2383–2433 (FPCS…ISDD), 2474–2508 (DVSHSDTEESVTDHAGPPSSELQGSDKRSREKIAT), 2588–2751 (LTEV…VKKI), 2795–2824 (QSNEIVVNDSGSDNVKKQRTEMSSKAMPDS), 3036–3067 (PPLEETETSPTKSPDSLEFSPGKESPSSDVFD), 3131–3272 (TFYT…KKHH), 3298–3516 (PVIR…SVFP), 3538–3607 (KGLD…HEGK), 3635–3718 (GEHT…DPKL), 3868–3897 (KATSPKDTFPPNHMSNTKASKMKQVSQSEK), and 4019–4090 (KKMQ…CERT). Over residues 1977-1986 (PKSDKGHSPE) the composition is skewed to basic and acidic residues. Positions 2115–2136 (FSQHDQDKSPLSDSGFETRSEK) are enriched in basic and acidic residues. The segment covering 2137–2146 (TPSAPQSAES) has biased composition (polar residues). Positions 2299–2308 (AVSPDVHKSA) are enriched in basic and acidic residues. Positions 2390–2399 (GQQEEEELTA) are enriched in acidic residues. Residues 2407–2417 (LESSRVNTPVS) are compositionally biased toward polar residues. 2 stretches are compositionally biased toward basic and acidic residues: residues 2497 to 2508 (GSDKRSREKIAT) and 2588 to 2612 (LTEVSQFFRDKTEKLNDELQSPEKK). The segment covering 2622–2631 (SSQSPTSSSP) has biased composition (low complexity). The span at 2706–2716 (SGFQLKQSKLS) shows a compositional bias: polar residues. The span at 2720-2742 (LKFEQGTHAKSKDMSQEDRKSDG) shows a compositional bias: basic and acidic residues. The segment covering 2796–2807 (SNEIVVNDSGSD) has biased composition (polar residues). 2 stretches are compositionally biased toward polar residues: residues 3154 to 3186 (EQVSFLDSSGKSPLTPETPSSEEVSYEFTSKTP) and 3214 to 3224 (KSTSLKQTTVE). 2 stretches are compositionally biased toward basic and acidic residues: residues 3227–3242 (AVEREMPNDVSKDSNQ) and 3335–3361 (KLKEVDDEQKEKPKASAEKASNQKELE). A compositionally biased stretch (polar residues) spans 3377-3402 (SPQNEIAQNGNNDQSITECSIATTAE). Over residues 3409–3428 (ATEIDSLDGYDLQDEDDGLT) the composition is skewed to acidic residues. 2 stretches are compositionally biased toward basic and acidic residues: residues 3465-3481 (EVIEEEGKVGPDEDKPP) and 3549-3575 (RGDDEVFDSKSREDETKPFGLAVEDRS). The span at 3576 to 3598 (PATTPDTTPARTPTDESTPTSEP) shows a compositional bias: low complexity. A compositionally biased stretch (basic and acidic residues) spans 3637-3651 (HTSEGKSGDQGEGDK). 4 stretches are compositionally biased toward polar residues: residues 3654–3669 (VTATPQPQSGDTTVET), 3676–3713 (ETPTVEPNPSIPTSGECQEGTSSSGSLEKSAAATNTSK), 3880–3897 (HMSNTKASKMKQVSQSEK), and 4033–4052 (SRNTSLSETSRGGQPSVTTK). A compositionally biased stretch (basic and acidic residues) spans 4053–4076 (SARDKKTEAAPLKSKSEKAGSEKR). Residues 4090–4174 (TDIRMAIVAD…DIVTLLEGPI (85 aa)) form the Death domain. S4211 and S4229 each carry phosphoserine. 2 disordered regions span residues 4251-4298 (NGSH…EPAS) and 4323-4377 (PVSM…KSHS). Positions 4268 to 4277 (PESQNDVGKQ) are enriched in polar residues. A phosphoserine mark is found at S4290 and S4298. The segment covering 4337-4347 (GKPRLSLHEEE) has biased composition (basic and acidic residues). A Phosphoserine modification is found at S4350. The segment covering 4362 to 4377 (VKTKKEIRHVEKKSHS) has biased composition (basic residues).

In terms of assembly, directly interacts with DMD and betaDAG1. This interaction does not interfere with binding between DMD and betaDAG1. It is also required for DMD and betaDAG1 retention at costameres. Interacts (via N-terminal ANK repeats) with SCHIP1 isoform 5 (via C-terminus); this interaction is required for the localization at axon initial segments (AISs) and nodes of Ranvier (NRs). May be a constituent of a NFASC/NRCAM/ankyrin G complex. Interacts with RHBG. Interacts with PLEC and FLNC. Interacts with KCNA1; this inhibits channel activity. Interacts (via ANK repeats) with IQCJ-SCHIP1; required for IQCJ-SCHIP1 localization at axon initial segments (AIS) and nodes of Ranvier. Interacts with SCHIP1. Interacts with SCN5A. Interacts with PKP2 and GJA1/CX43. Expressed in brain, neurons, muscles and other tissues.

It localises to the cytoplasm. Its subcellular location is the cytoskeleton. The protein resides in the cell projection. The protein localises to the axon. It is found in the cell membrane. It localises to the sarcolemma. Its subcellular location is the postsynaptic cell membrane. The protein resides in the lysosome. The protein localises to the T-tubule. It is found in the golgi apparatus. In terms of biological role, membrane-cytoskeleton linker. May participate in the maintenance/targeting of ion channels and cell adhesion molecules at the nodes of Ranvier and axonal initial segments. In skeletal muscle, required for costamere localization of DMD and betaDAG1. Regulates KCNA1 channel activity in function of dietary Mg(2+) levels, and thereby contributes to the regulation of renal Mg(2+) reabsorption. Required for intracellular adhesion and junctional conductance in myocytes, potentially via stabilization of GJA1/CX43 protein abundance and promotion of PKP2, GJA1/CX43, and SCN5A/Nav1.5 localization to cell-cell junctions. Functionally, may be part of a Golgi-specific membrane cytoskeleton in association with beta-spectrin. In Homo sapiens (Human), this protein is Ankyrin-3.